A 308-amino-acid polypeptide reads, in one-letter code: Uricase-2 isozyme 1 (308 aa).

Active-site charge relay system residues include Lys17 and Thr63. Positions 63, 64, 165, 182, 237, 238, and 264 each coordinate urate. The Charge relay system role is filled by His266. Positions 306–308 (SKL) match the Microbody targeting signal motif.

This sequence belongs to the uricase family.

It localises to the peroxisome. It catalyses the reaction urate + O2 + H2O = 5-hydroxyisourate + H2O2. It functions in the pathway purine metabolism; urate degradation; (S)-allantoin from urate: step 1/3. In terms of biological role, catalyzes the oxidation of uric acid to 5-hydroxyisourate, which is further processed to form (S)-allantoin. This Canavalia lineata (Beach bean) protein is Uricase-2 isozyme 1.